We begin with the raw amino-acid sequence, 224 residues long: Deoxyribose-phosphate aldolase (224 aa).

The active-site Proton donor/acceptor is the Asp94. Catalysis depends on Lys158, which acts as the Schiff-base intermediate with acetaldehyde. Lys187 (proton donor/acceptor) is an active-site residue.

The protein belongs to the DeoC/FbaB aldolase family. DeoC type 1 subfamily. As to quaternary structure, homodimer.

The protein localises to the cytoplasm. It catalyses the reaction 2-deoxy-D-ribose 5-phosphate = D-glyceraldehyde 3-phosphate + acetaldehyde. With respect to regulation, activated by citrate. Inhibited by NaBH(4). Activity is independent of divalent metal cations. Functionally, catalyzes a reversible aldol reaction between acetaldehyde and D-glyceraldehyde 3-phosphate to generate 2-deoxy-D-ribose 5-phosphate. Could be involved in pentose biosynthesis. This chain is Deoxyribose-phosphate aldolase, found in Thermococcus kodakarensis (strain ATCC BAA-918 / JCM 12380 / KOD1) (Pyrococcus kodakaraensis (strain KOD1)).